We begin with the raw amino-acid sequence, 124 residues long: p53-regulated apoptosis-inducing protein 1 (124 aa).

Polar residues predominate over residues 1 to 16 (MGSSSEASFRSAQASC). The disordered stretch occupies residues 1–46 (MGSSSEASFRSAQASCSGARRQGLGRGDQNLSVMPPNGRAQTHTPG).

In terms of tissue distribution, only found to be expressed in thymus.

The protein resides in the mitochondrion. In terms of biological role, may play an important role in mediating p53/TP53-dependent apoptosis. This is p53-regulated apoptosis-inducing protein 1 (TP53AIP1) from Homo sapiens (Human).